Here is a 137-residue protein sequence, read N- to C-terminus: Large ribosomal subunit protein uL16 (137 aa).

The protein belongs to the universal ribosomal protein uL16 family. In terms of assembly, part of the 50S ribosomal subunit.

In terms of biological role, binds 23S rRNA and is also seen to make contacts with the A and possibly P site tRNAs. The sequence is that of Large ribosomal subunit protein uL16 from Ectopseudomonas mendocina (strain ymp) (Pseudomonas mendocina).